We begin with the raw amino-acid sequence, 288 residues long: Mortality factor 4-like protein 2 (288 aa).

The segment covering 1 to 15 (MSSRKQASQTRGQQS) has biased composition (polar residues). Positions 1–115 (MSSRKQASQT…DPTVESEEAF (115 aa)) are disordered. Residue serine 71 is modified to Phosphoserine. An MRG domain is found at 117 to 288 (SRMEVKVKIP…ASADYHRKAL (172 aa)).

In terms of assembly, component of the NuA4 histone acetyltransferase complex which contains the catalytic subunit KAT5/TIP60 and the subunits EP400, TRRAP/PAF400, BRD8/SMAP, EPC1, DMAP1/DNMAP1, RUVBL1/TIP49, RUVBL2, ING3, actin, ACTL6A/BAF53A, MORF4L1/MRG15, MORF4L2/MRGX, MRGBP, YEATS4/GAS41 and VPS72/YL1. The NuA4 complex interacts with MYC and the adenovirus E1A protein. MORF4L1 may also participate in the formation of NuA4 related complexes which lack the KAT5/TIP60 catalytic subunit, but which include the SWI/SNF related protein SRCAP. Component of the MSIN3A histone deacetylase complex, which includes SIN3A, HDAC2, ARID4B, MORF4L1, RBBP4/RbAp48, and RBBP7/RbAp46. Interacts with MRFAP1 and RB1. May also interact with one or more as yet undefined members of the TLE (transducin-like enhancer of split) family of transcriptional repressors.

It is found in the nucleus. In terms of biological role, component of the NuA4 histone acetyltransferase complex which is involved in transcriptional activation of select genes principally by acetylation of nucleosomal histone H4 and H2A. This modification may both alter nucleosome - DNA interactions and promote interaction of the modified histones with other proteins which positively regulate transcription. This complex may be required for the activation of transcriptional programs associated with oncogene and proto-oncogene mediated growth induction, tumor suppressor mediated growth arrest and replicative senescence, apoptosis, and DNA repair. The NuA4 complex ATPase and helicase activities seem to be, at least in part, contributed by the association of RUVBL1 and RUVBL2 with EP400. NuA4 may also play a direct role in DNA repair when directly recruited to sites of DNA damage. Also a component of the MSIN3A complex which acts to repress transcription by deacetylation of nucleosomal histones. The sequence is that of Mortality factor 4-like protein 2 (Morf4l2) from Mus musculus (Mouse).